The sequence spans 310 residues: Aspartate carbamoyltransferase catalytic subunit (310 aa).

2 residues coordinate carbamoyl phosphate: arginine 58 and threonine 59. An L-aspartate-binding site is contributed by lysine 86. Arginine 108, histidine 137, and glutamine 140 together coordinate carbamoyl phosphate. Residues arginine 170 and arginine 225 each coordinate L-aspartate. Residues glycine 264 and proline 265 each coordinate carbamoyl phosphate.

The protein belongs to the aspartate/ornithine carbamoyltransferase superfamily. ATCase family. Heterododecamer (2C3:3R2) of six catalytic PyrB chains organized as two trimers (C3), and six regulatory PyrI chains organized as three dimers (R2).

It carries out the reaction carbamoyl phosphate + L-aspartate = N-carbamoyl-L-aspartate + phosphate + H(+). It functions in the pathway pyrimidine metabolism; UMP biosynthesis via de novo pathway; (S)-dihydroorotate from bicarbonate: step 2/3. Catalyzes the condensation of carbamoyl phosphate and aspartate to form carbamoyl aspartate and inorganic phosphate, the committed step in the de novo pyrimidine nucleotide biosynthesis pathway. The polypeptide is Aspartate carbamoyltransferase catalytic subunit (Coxiella burnetii (strain CbuK_Q154) (Coxiella burnetii (strain Q154))).